Consider the following 277-residue polypeptide: Protein OPG166 (277 aa).

Asparagine 29 and asparagine 58 each carry an N-linked (GlcNAc...) asparagine; by host glycan. 5 consecutive transmembrane segments (helical) span residues 124–144 (TMLM…EIAY), 156–176 (GILQ…AFLF), 186–206 (IIGL…KVFS), 219–239 (LIIY…GLSL), and 247–267 (LLLS…LFLV).

It belongs to the orthopoxvirus OPG166 protein family.

It localises to the host membrane. Functionally, promotes, when overexpressed, the influx of extracellular Ca(2+), leading to membrane permeability and host cell necrosis. This chain is Protein OPG166 (OPG166), found in Cynomys gunnisoni (Gunnison's prairie dog).